Reading from the N-terminus, the 419-residue chain is Interferon regulatory factor 3 (419 aa).

Phosphothreonine is present on Thr3. A DNA-binding region (IRF tryptophan pentad repeat) is located at residues 5-111 (KPRILPWLIS…DPHKIYEFVT (107 aa)). Ser14 carries the post-translational modification Phosphoserine. Thr75 bears the Phosphothreonine mark. Ser97 and Ser123 each carry phosphoserine. The segment at 118–137 (PEPDTSLDLSGRYSTSDTHE) is disordered. The interval 140–419 (LDKLLSGMDL…LRDLVEDMDF (280 aa)) is mediates interaction with ZDHHC11. Lys191 participates in a covalent cross-link: Glycyl lysine isopeptide (Lys-Gly) (interchain with G-Cter in ISG15). Residues 198–358 (DEWEFQVTVF…SWPQDEPWVK (161 aa)) are interaction with HERC5. Phosphothreonine is present on residues Thr235 and Thr251. A disulfide bridge links Cys265 with Cys287. Glycyl lysine isopeptide (Lys-Gly) (interchain with G-Cter in ISG15) cross-links involve residues Lys358 and Lys364. Lys364 is subject to N6-acetyllysine. Ser383 is modified (phosphoserine). Ser384 is modified (diphosphoserine). At Ser384 the chain carries Phosphoserine; by TBK1. Ser394 is subject to Phosphoserine; by IKKE. Residue Ser396 is modified to Phosphoserine. Thr402 bears the Phosphothreonine mark.

It belongs to the IRF family. Monomer. Homodimer; phosphorylation-induced. Interacts (when phosphorylated) with CREBBP. Interacts with MAVS (via phosphorylated pLxIS motif). Interacts with TICAM1 (via phosphorylated pLxIS motif). Interacts with STING1 (via phosphorylated pLxIS motif). Interacts with IKBKE and TBK1. Interacts with TICAM2. Interacts with RBCK1. Interacts with HERC5. Interacts with DDX3X; the interaction allows the phosphorylation and activation of IRF3 by IKBKE. Interacts with TRIM21 and ULK1, in the presence of TRIM21; this interaction leads to IRF3 degradation by autophagy. Interacts with RIOK3; RIOK3 probably mediates the interaction of TBK1 with IRF3. Interacts with ILRUN; the interaction inhibits IRF3 binding to its DNA consensus sequence. Interacts with LYAR; this interaction impairs IRF3 DNA-binding activity. Interacts with TRAF3. Interacts with ZDHHC11; ZDHHC11 recruits IRF3 to STING1 upon DNA virus infection and thereby promotes IRF3 activation. Interacts with HSP90AA1; the interaction mediates IRF3 association with TOMM70. Interacts with BCL2; the interaction decreases upon Sendai virus infection. Interacts with BAX; the interaction is direct, increases upon virus infection and mediates the formation of the apoptosis complex TOMM70:HSP90AA1:IRF3:BAX. Interacts with DDX56. Interacts with NBR1. As to quaternary structure, (Microbial infection) Interacts with Porcine epidemic diarrhea virus E protein; this interaction prevents IRF3 translocation to the nucleus and thereby prevents type I interferon production. In terms of assembly, (Microbial infection) Interacts with African swine fever virus (ASFV) P14.5/E120R; this interaction interferes with the recruitment of IRF3 to TBK1, which in turn suppresses IRF3 phosphorylation, decreasing interferon production via the cGAS/STING pathway. (Microbial infection) Interacts with African swine fever virus (ASFV) MGF360-14L; this interaction mediates degradation of IRF3 through TRIM21 and ubiquitin-meditated proteolysis. As to quaternary structure, (Microbial infection) Interacts with African swine fever virus (ASFV) E301R; this interaction inhibits nuclear translocation of IRF3 to the nucleus. In terms of assembly, (Microbial infection) Interacts with African swine fever virus (ASFV) minor capsid protein M1249L; this interaction mediates IRF3 degradation. In terms of processing, constitutively phosphorylated on many Ser/Thr residues. Activated following phosphorylation by TBK1 and IKBKE. Innate adapter proteins, such as MAVS, STING1 or TICAM1, are first activated by viral RNA, cytosolic DNA, and bacterial lipopolysaccharide (LPS), respectively, leading to activation of the kinases TBK1 and IKBKE. These kinases then phosphorylate the adapter proteins on the pLxIS motif, leading to recruitment of IRF3, thereby licensing IRF3 for phosphorylation by TBK1. Phosphorylation at Ser-384 is followed by pyrophosphorylation at the same residue, promoting phosphorylation at Ser-394. Phosphorylated IRF3 dissociates from the adapter proteins, dimerizes, and then enters the nucleus to induce IFNs. Post-translationally, pyrophosphorylated by UAP1 following phosphorylation at Ser-384 by TBK1. Pyrophosphorylation promotes subsequent phosphorylation at Ser-394, leading to homodimerization of IRF3. Acetylation at Lys-364 by KAT8 inhibits recruimtent to promoters and transcription factor activity. Acetylation by KAT8 is promoted by phosphorylation at Ser-394. In terms of processing, ubiquitinated; ubiquitination involves RBCK1 leading to proteasomal degradation. Polyubiquitinated; ubiquitination involves TRIM21 leading to proteasomal degradation. Ubiquitinated by UBE3C, leading to its degradation. Deubiquitinated by USP5 on both 'Lys-48'-linked unanchored and 'Lys-63'-linked anchored polyubiquitin, leading to inhibition of antiviral innate immunity. Post-translationally, ISGylated by HERC5 resulting in sustained IRF3 activation and in the inhibition of IRF3 ubiquitination by disrupting PIN1 binding. The phosphorylation state of IRF3 does not alter ISGylation. (Microbial infection) Phosphorylated by pseudorabies virus protein kinase UL13; leading to decreased IRF3 binding to the IRF3-responsive promoters and downstream ISG expression. In terms of processing, proteolytically cleaved by apoptotic caspases during apoptosis, leading to its inactivation. Cleavage by CASP3 during virus-induced apoptosis inactivates it, preventing cytokine overproduction.

The protein resides in the cytoplasm. The protein localises to the nucleus. It is found in the mitochondrion. With respect to regulation, in the absence of viral infection, maintained as a monomer in an autoinhibited state. Phosphorylation by TBK1 and IKBKE disrupts this autoinhibition leading to the liberation of the DNA-binding and dimerization activities and its nuclear localization where it can activate type I IFN and ISG genes. Phosphorylation and activation follow the following steps: innate adapter proteins, such as MAVS, STING1 or TICAM1, are first activated by viral RNA, cytosolic DNA and bacterial lipopolysaccharide (LPS), respectively, leading to activation of the kinases TBK1 and IKBKE. These kinases then phosphorylate the adapter proteins on their pLxIS motif, leading to recruitment of IRF3, thereby licensing IRF3 for phosphorylation by TBK1. Phosphorylated IRF3 dissociates from the adapter proteins, dimerizes, and then enters the nucleus to induce IFNs. Key transcriptional regulator of type I interferon (IFN)-dependent immune responses which plays a critical role in the innate immune response against DNA and RNA viruses. Regulates the transcription of type I IFN genes (IFN-alpha and IFN-beta) and IFN-stimulated genes (ISG) by binding to an interferon-stimulated response element (ISRE) in their promoters. Acts as a more potent activator of the IFN-beta (IFNB) gene than the IFN-alpha (IFNA) gene and plays a critical role in both the early and late phases of the IFNA/B gene induction. Found in an inactive form in the cytoplasm of uninfected cells and following viral infection, double-stranded RNA (dsRNA), or toll-like receptor (TLR) signaling, is phosphorylated by IKBKE and TBK1 kinases. This induces a conformational change, leading to its dimerization and nuclear localization and association with CREB binding protein (CREBBP) to form dsRNA-activated factor 1 (DRAF1), a complex which activates the transcription of the type I IFN and ISG genes. Can activate distinct gene expression programs in macrophages and can induce significant apoptosis in primary macrophages. This is Interferon regulatory factor 3 (IRF3) from Sus scrofa (Pig).